We begin with the raw amino-acid sequence, 309 residues long: Tyrosine recombinase XerD (309 aa).

The Core-binding (CB) domain occupies 3 to 88; that stretch reads MRASLAIENF…ALRQFFRFLY (86 aa). Residues 109 to 302 enclose the Tyr recombinase domain; sequence PLPKIMSVEN…LEERLHKLVS (194 aa). Residues arginine 158, lysine 182, histidine 254, arginine 257, and histidine 280 contribute to the active site. The O-(3'-phospho-DNA)-tyrosine intermediate role is filled by tyrosine 289.

It belongs to the 'phage' integrase family. XerD subfamily. As to quaternary structure, forms a cyclic heterotetrameric complex composed of two molecules of XerC and two molecules of XerD.

Its subcellular location is the cytoplasm. Site-specific tyrosine recombinase, which acts by catalyzing the cutting and rejoining of the recombining DNA molecules. The XerC-XerD complex is essential to convert dimers of the bacterial chromosome into monomers to permit their segregation at cell division. It also contributes to the segregational stability of plasmids. This Brucella suis biovar 1 (strain 1330) protein is Tyrosine recombinase XerD.